The primary structure comprises 678 residues: ABC transporter G family member 13 (678 aa).

Residues 10 to 254 (VAWEDLTVVI…FGEAGFPCPS (245 aa)) enclose the ABC transporter domain. ATP is bound at residue 48 to 55 (GPSGSGKS). The region spanning 355–567 (KQLRILTQRS…ALQGAYKNEM (213 aa)) is the ABC transmembrane type-2 domain. Transmembrane regions (helical) follow at residues 374–394 (YYWM…SIFF), 409–429 (CGGF…QSFI), 446–466 (VAVY…LMCL), 490–510 (LDLI…ASVV), 513–533 (FLMG…SAGF), and 602–622 (LDLA…FAIL). S658 bears the Phosphoserine mark.

It belongs to the ABC transporter superfamily. ABCG family. Eye pigment precursor importer (TC 3.A.1.204) subfamily.

It localises to the membrane. In Arabidopsis thaliana (Mouse-ear cress), this protein is ABC transporter G family member 13 (ABCG13).